A 337-amino-acid chain; its full sequence is Tryptophan--tRNA ligase 2 (337 aa).

ATP is bound by residues 13–15 and 22–23; these read QPT and GN. The short motif at 14-23 is the 'HIGH' region element; sequence PTAGSFHLGN. An L-tryptophan-binding site is contributed by Asp139. Residues 151–153, Ile190, and 199–203 each bind ATP; these read GED and KMSKS. The short motif at 199 to 203 is the 'KMSKS' region element; the sequence is KMSKS.

Belongs to the class-I aminoacyl-tRNA synthetase family. As to quaternary structure, homodimer.

The protein localises to the cytoplasm. It catalyses the reaction tRNA(Trp) + L-tryptophan + ATP = L-tryptophyl-tRNA(Trp) + AMP + diphosphate + H(+). Functionally, catalyzes the attachment of tryptophan to tRNA(Trp). In Streptomyces avermitilis (strain ATCC 31267 / DSM 46492 / JCM 5070 / NBRC 14893 / NCIMB 12804 / NRRL 8165 / MA-4680), this protein is Tryptophan--tRNA ligase 2.